Here is a 657-residue protein sequence, read N- to C-terminus: Translation factor GUF1, mitochondrial (657 aa).

A mitochondrion-targeting transit peptide spans M1–N39. In terms of domain architecture, tr-type G spans E59–V239. GTP contacts are provided by residues T109–S116, L173–E177, and L227–T230.

Belongs to the TRAFAC class translation factor GTPase superfamily. Classic translation factor GTPase family. LepA subfamily.

The protein resides in the mitochondrion inner membrane. The catalysed reaction is GTP + H2O = GDP + phosphate + H(+). Its function is as follows. Promotes mitochondrial protein synthesis. May act as a fidelity factor of the translation reaction, by catalyzing a one-codon backward translocation of tRNAs on improperly translocated ribosomes. Binds to mitochondrial ribosomes in a GTP-dependent manner. This chain is Translation factor GUF1, mitochondrial, found in Ajellomyces capsulatus (strain NAm1 / WU24) (Darling's disease fungus).